The sequence spans 253 residues: Exosome complex component Rrp4 (253 aa).

The S1 motif domain maps to 80–153; the sequence is GDIVIGIVVD…SRGPILTVQD (74 aa).

The protein belongs to the RRP4 family. In terms of assembly, component of the archaeal exosome complex. Forms a trimer of Rrp4 and/or Csl4 subunits. The trimer associates with a hexameric ring-like arrangement composed of 3 Rrp41-Rrp42 heterodimers.

Its subcellular location is the cytoplasm. Its function is as follows. Non-catalytic component of the exosome, which is a complex involved in RNA degradation. Increases the RNA binding and the efficiency of RNA degradation. Confers strong poly(A) specificity to the exosome. In Ignisphaera aggregans (strain DSM 17230 / JCM 13409 / AQ1.S1), this protein is Exosome complex component Rrp4.